The primary structure comprises 187 residues: UPF0301 protein LPC_2717 (187 aa).

It belongs to the UPF0301 (AlgH) family.

In Legionella pneumophila (strain Corby), this protein is UPF0301 protein LPC_2717.